Consider the following 172-residue polypeptide: Large ribosomal subunit protein uL10 (172 aa).

It belongs to the universal ribosomal protein uL10 family. In terms of assembly, part of the ribosomal stalk of the 50S ribosomal subunit. The N-terminus interacts with L11 and the large rRNA to form the base of the stalk. The C-terminus forms an elongated spine to which L12 dimers bind in a sequential fashion forming a multimeric L10(L12)X complex.

Its function is as follows. Forms part of the ribosomal stalk, playing a central role in the interaction of the ribosome with GTP-bound translation factors. The polypeptide is Large ribosomal subunit protein uL10 (Rhizobium etli (strain ATCC 51251 / DSM 11541 / JCM 21823 / NBRC 15573 / CFN 42)).